The primary structure comprises 348 residues: Histidinol-phosphate aminotransferase (348 aa).

The residue at position 210 (lysine 210) is an N6-(pyridoxal phosphate)lysine.

It belongs to the class-II pyridoxal-phosphate-dependent aminotransferase family. Histidinol-phosphate aminotransferase subfamily. As to quaternary structure, homodimer. Requires pyridoxal 5'-phosphate as cofactor.

The catalysed reaction is L-histidinol phosphate + 2-oxoglutarate = 3-(imidazol-4-yl)-2-oxopropyl phosphate + L-glutamate. The protein operates within amino-acid biosynthesis; L-histidine biosynthesis; L-histidine from 5-phospho-alpha-D-ribose 1-diphosphate: step 7/9. This chain is Histidinol-phosphate aminotransferase, found in Pseudomonas putida (strain ATCC 700007 / DSM 6899 / JCM 31910 / BCRC 17059 / LMG 24140 / F1).